Reading from the N-terminus, the 1070-residue chain is Envelopment polyprotein (1070 aa).

Positions 1-17 are cleaved as a signal peptide; it reads MMFSRVMQLALICAVTC. Residues 18–457 lie on the Lumenal side of the membrane; sequence EDNPCLWERF…SNPQCYPYGK (440 aa). Intrachain disulfides connect C22/C55, C152/C165, C211/C221, C267/C309, C296/C301, C353/C356, C360/C429, and C380/C385. N269 carries N-linked (GlcNAc...) asparagine; by host glycosylation. Residues 458-478 traverse the membrane as a helical segment; sequence WFLLFLILATLYIIVALLKTI. At 479–536 the chain is on the cytoplasmic side; it reads MRIFMACLSVLYGPFIIIIKISRCLGRLGKRKGERTYVRLMEALDDERKPEVVRAPVS. The interval 480–522 is golgi retention signal; sequence RIFMACLSVLYGPFIIIIKISRCLGRLGKRKGERTYVRLMEAL. The internal signal sequence for glycoprotein C stretch occupies residues 541–560; the sequence is KQPRIVLFIVLALLVHMALC. A propeptide spanning residues 550–560 is cleaved from the precursor; sequence VLALLVHMALC. Residues 550-1023 lie on the Lumenal side of the membrane; sequence VLALLVHMAL…NWLDTLFGAS (474 aa). Disulfide bonds link C561/C602, C574/C584, C642/C831, C648/C696, C654/C703, C659/C685, C689/C694, C799/C813, C896/C966, and C906/C909. Residues 648–654 are fusion loop; it reads CRWAGSC. A fusion loop region spans residues 690–701; the sequence is GGAACGCFNAAP. A helical membrane pass occupies residues 1024 to 1044; it reads LLGKILGIGLAILSPFILILI. Residues 1045-1070 lie on the Cytoplasmic side of the membrane; sequence LRWILRVVLRRSRIRREPKYEMAKYS.

The protein belongs to the phlebovirus envelope glycoprotein family. In terms of assembly, heterodimer with glycoprotein C. Heterodimer with glycoprotein N. Homotrimer (postfusion). Post-translationally, specific enzymatic cleavages in vivo yield mature proteins Glycoprotein C, and Glycoprotein N. Glycosylated. In terms of processing, palmitoylated.

It is found in the virion membrane. The protein resides in the host Golgi apparatus membrane. The protein localises to the host endoplasmic reticulum membrane. Its function is as follows. Structural component of the virion that interacts with glycoprotein C. It shields the hydrophobic fusion loops of the glycoprotein C, preventing premature fusion. The glycoprotein protrusions are arranged on an icosahedral lattice, with T=12 triangulation. They are able to attach the virion to the host cell receptor CD209/DC-SIGN and to promote fusion of membranes with the late endosome after endocytosis of the virion. Plays a role in the packaging of ribonucleoproteins during virus assembly. In terms of biological role, structural component of the virion that interacts with glycoprotein N. Acts as a class II fusion protein that is activated upon acidification and subsequent repositioning of the glycoprotein N. The glycoprotein protrusions are arranged on an icosahedral lattice, with T=12 triangulation. They are able to attach the virion to the host cell receptor CD209/DC-SIGN and to promote fusion of membranes with the late endosome after endocytosis of the virion. This Amblyomma variegatum (Tropical bont tick) protein is Envelopment polyprotein (GP).